Consider the following 33-residue polypeptide: ELRLPEIARPVPEVLPARLPLPALPRNKMAKNQ.

As to expression, expressed by the skin glands.

The protein resides in the secreted. In terms of biological role, non-cytotoxic peptide with immunosuppressive and insulinotropic effects. Induces an increased production of the anti-inflammatory cytokine IL-10 and inhibits production of the pro-inflammatory cytokines TNF-alpha and IL-1beta, when incubated with mouse peritoneal cells. Does not display growth-inhibitory activity against the Gram-positive S.epidermidis and Gram-negative E.coli bacteria and against the opportunistic yeast pathogen C.parapsilosis (MIC&gt;128 uM). In addition, it lacks cytotoxic activity against mouse erythrocytes (LC(50)&gt;500 uM) and A549 human non-small cell lung adenocarcinoma cells (LC(50)&gt;100 uM). Moderately stimulates insulin release from rat clonal beta-cells and mouse pancreatic islets. Its function is as follows. Non-cytotoxic peptide with immunosuppressive but without insulinotropic effects. Inhibits production of the pro-inflammatory cytokines TNF-alpha, but has no effect on IL-10 and IL-1beta production, when incubated with mouse peritoneal cells. Has no activity of stimulation of insulin release. The sequence is that of Rhinophrynin-33 from Rhinophrynus dorsalis (Mexican burrowing toad).